We begin with the raw amino-acid sequence, 223 residues long: uncharacterized protein (223 aa).

One can recognise an HTH tetR-type domain in the interval 11 to 71 (EATFESFIDA…YLLEKRQMKK (61 aa)). The segment at residues 34–53 (SVEDISRAAGYSKGAFYVHF) is a DNA-binding region (H-T-H motif).

This is an uncharacterized protein from Bacillus subtilis (strain 168).